Here is a 477-residue protein sequence, read N- to C-terminus: Proton-coupled amino acid transporter 3 (477 aa).

At methionine 1–glutamine 54 the chain is on the cytoplasmic side. A compositionally biased stretch (low complexity) spans glycine 19 to lysine 40. Residues glycine 19–proline 43 form a disordered region. A helical transmembrane segment spans residues isoleucine 55–valine 75. Residues lysine 76–asparagine 77 lie on the Extracellular side of the membrane. The chain crosses the membrane as a helical span at residues alanine 78 to methionine 98. Residues aspartate 99–tyrosine 144 are Cytoplasmic-facing. The helical transmembrane segment at valine 145–leucine 165 threads the bilayer. Over alanine 166–leucine 202 the chain is Extracellular. A helical membrane pass occupies residues threonine 203–phenylalanine 223. Topologically, residues serine 224–threonine 225 are cytoplasmic. Residues leucine 226 to proline 246 traverse the membrane as a helical segment. Residues histidine 247–threonine 259 lie on the Extracellular side of the membrane. Residues phenylalanine 260 to leucine 280 form a helical membrane-spanning segment. Topologically, residues lysine 281–proline 291 are cytoplasmic. Residues alanine 292 to glycine 312 form a helical membrane-spanning segment. The Extracellular segment spans residues tyrosine 313–glycine 344. A helical transmembrane segment spans residues isoleucine 345–valine 365. Residues serine 366–leucine 374 are Cytoplasmic-facing. Residues phenylalanine 375–isoleucine 395 traverse the membrane as a helical segment. Over proline 396–aspartate 399 the chain is Extracellular. A helical transmembrane segment spans residues leucine 400–leucine 420. The Cytoplasmic portion of the chain corresponds to leucine 421 to serine 432. A helical transmembrane segment spans residues cysteine 433–glycine 453. At threonine 454–isoleucine 477 the chain is on the extracellular side.

Belongs to the amino acid/polyamine transporter 2 family. In terms of tissue distribution, specifically expressed in testis.

The protein localises to the membrane. The polypeptide is Proton-coupled amino acid transporter 3 (Slc36a3) (Mus musculus (Mouse)).